Reading from the N-terminus, the 1111-residue chain is Nuclear migration and anchoring protein unc-84 (1111 aa).

The Nuclear segment spans residues 1–509; that stretch reads MAPATEADNN…LTDKKSSKFS (509 aa). 2 required for nuclear envelope localization regions span residues 118–244 and 503–507; these read YILR…SQTL and KKSSK. A disordered region spans residues 232 to 253; sequence ERASRMTTRSQTLERSRKFDGL. Residues 243–252 are compositionally biased toward basic and acidic residues; that stretch reads TLERSRKFDG. Residues 510–530 traverse the membrane as a helical segment; it reads WCQILGLLLALLFAIFLLGFL. Residues 531–1111 are Perinuclear space-facing; it reads TSDNTAIRVK…LRVHGKVVQV (581 aa). Residues 912-1111 form an interaction with zyg-12 region; the sequence is QYDKNHLEAI…LRVHGKVVQV (200 aa). Residues 945–1109 form the SUN domain; sequence GGAVVSTRCS…YRLRVHGKVV (165 aa).

In terms of assembly, component of the unc-83-unc-84 LINC complex which contains at least unc-83 and unc-84. Within the unc-83-unc-84 LINC complex interacts (via C-terminus) with unc-83; the interaction is probably required to recruit unc-83 to the nuclear membrane. Most likely interacts with anc-1; the interaction is probably required to recruit anc-1 to the nuclear envelope. Interacts (via C-terminus) with zyg-12 (via C-terminus); the interaction is direct. May interact with lmn-1; this interaction may be required to complete the connection between the nuclear lamina and the cytoskeleton. As to expression, expressed in all somatic cells. Not expressed in germ cells in the mitotic and transition zones of the gonad. One study shows expression at the beginning of the late pachytene stage in the proximal gonad, but there is no expression in the male germline, suggesting expression is specific to oogenesis in hermaphrodites.

The protein resides in the nucleus inner membrane. It localises to the cytoplasm. Its subcellular location is the cytoskeleton. Its function is as follows. Involved in nuclear migration and anchoring in hypodermal precursor cells. Most likely recruits anc-1 to the nuclear envelope where anc-1 functions to tether the nucleus to the actin cytoskeleton. Component of the unc-83-unc-84 LINC (LInker of Nucleoskeleton and Cytoskeleton) complex where it recruits and interacts with unc-83 to form a bridge connecting the nuclear envelope to the cytoskeleton which allows for nuclear transport along microtubules. Its role in nuclear migration may be in association with lamin, lmn-1. Regulates nuclear migrations in one-cell embryos, controlling the posterior migration of the male pronucleus following fertilization. Not required for centrosome attachment to the nucleus. Plays a role in the maintenance of the nuclear envelope architecture in body wall muscle cells. May be involved in DNA damage repair through an association with zyg-12. Potentially has roles in homologous recombination, double strand break repair and meiotic recombination. Specifically, may in part inhibit non-homologous end joining repair, most likely through recruiting fan-1 to the nucleoplasm, to facilitate the repair of DNA cross-links. In Caenorhabditis elegans, this protein is Nuclear migration and anchoring protein unc-84.